A 171-amino-acid polypeptide reads, in one-letter code: 6,7-dimethyl-8-ribityllumazine synthase (171 aa).

5-amino-6-(D-ribitylamino)uracil is bound by residues Phe24, 58-60 (ALE), and 82-84 (AVI). 87–88 (ET) provides a ligand contact to (2S)-2-hydroxy-3-oxobutyl phosphate. His90 acts as the Proton donor in catalysis. Asn115 is a binding site for 5-amino-6-(D-ribitylamino)uracil. Arg129 is a binding site for (2S)-2-hydroxy-3-oxobutyl phosphate. The disordered stretch occupies residues 150–171 (ALDQLGDDEDEEEDEEDEEERA). Residues 154–171 (LGDDEDEEEDEEDEEERA) show a composition bias toward acidic residues.

Belongs to the DMRL synthase family.

The enzyme catalyses (2S)-2-hydroxy-3-oxobutyl phosphate + 5-amino-6-(D-ribitylamino)uracil = 6,7-dimethyl-8-(1-D-ribityl)lumazine + phosphate + 2 H2O + H(+). Its pathway is cofactor biosynthesis; riboflavin biosynthesis; riboflavin from 2-hydroxy-3-oxobutyl phosphate and 5-amino-6-(D-ribitylamino)uracil: step 1/2. Catalyzes the formation of 6,7-dimethyl-8-ribityllumazine by condensation of 5-amino-6-(D-ribitylamino)uracil with 3,4-dihydroxy-2-butanone 4-phosphate. This is the penultimate step in the biosynthesis of riboflavin. The chain is 6,7-dimethyl-8-ribityllumazine synthase from Burkholderia ambifaria (strain ATCC BAA-244 / DSM 16087 / CCUG 44356 / LMG 19182 / AMMD) (Burkholderia cepacia (strain AMMD)).